The sequence spans 105 residues: NADH-quinone oxidoreductase subunit K (105 aa).

The next 3 helical transmembrane spans lie at 7–27, 34–54, and 66–86; these read IGVN…MFAV, IVIL…FLTF, and FSLF…AIVI.

This sequence belongs to the complex I subunit 4L family. In terms of assembly, NDH-1 is composed of 14 different subunits. Subunits NuoA, H, J, K, L, M, N constitute the membrane sector of the complex.

Its subcellular location is the cell inner membrane. The catalysed reaction is a quinone + NADH + 5 H(+)(in) = a quinol + NAD(+) + 4 H(+)(out). In terms of biological role, NDH-1 shuttles electrons from NADH, via FMN and iron-sulfur (Fe-S) centers, to quinones in the respiratory chain. The immediate electron acceptor for the enzyme in this species is believed to be a menaquinone. Couples the redox reaction to proton translocation (for every two electrons transferred, four hydrogen ions are translocated across the cytoplasmic membrane), and thus conserves the redox energy in a proton gradient. The polypeptide is NADH-quinone oxidoreductase subunit K (Chlorobaculum parvum (strain DSM 263 / NCIMB 8327) (Chlorobium vibrioforme subsp. thiosulfatophilum)).